The following is a 413-amino-acid chain: Aspartate aminotransferase, cytoplasmic (413 aa).

L-aspartate is bound by residues G39 and W141. At S149 the chain carries Phosphoserine. An L-aspartate-binding site is contributed by N195. At K259 the chain carries N6-(pyridoxal phosphate)lysine. K318 carries the post-translational modification N6-succinyllysine. R387 contacts L-aspartate.

It belongs to the class-I pyridoxal-phosphate-dependent aminotransferase family. As to quaternary structure, homodimer. The cofactor is pyridoxal 5'-phosphate. Expressed in neurons of the retina. Localizes to the inner and outer plexiform layers, the inner and outer nuclear layer and the outer segments of photoreceptors.

The protein localises to the cytoplasm. The catalysed reaction is L-aspartate + 2-oxoglutarate = oxaloacetate + L-glutamate. It carries out the reaction L-cysteine + 2-oxoglutarate = 2-oxo-3-sulfanylpropanoate + L-glutamate. The enzyme catalyses (2S)-2-aminobutanoate + 2-oxoglutarate = 2-oxobutanoate + L-glutamate. It catalyses the reaction 3-sulfino-L-alanine + 2-oxoglutarate = 3-sulfinopyruvate + L-glutamate. With respect to regulation, inhibited by calcium ions. Its function is as follows. Biosynthesis of L-glutamate from L-aspartate or L-cysteine. Important regulator of levels of glutamate, the major excitatory neurotransmitter of the vertebrate central nervous system. Acts as a scavenger of glutamate in brain neuroprotection. The aspartate aminotransferase activity is involved in hepatic glucose synthesis during development and in adipocyte glyceroneogenesis. Using L-cysteine as substrate, regulates levels of mercaptopyruvate, an important source of hydrogen sulfide. Mercaptopyruvate is converted into H(2)S via the action of 3-mercaptopyruvate sulfurtransferase (3MST). Hydrogen sulfide is an important synaptic modulator and neuroprotectant in the brain. This Mus musculus (Mouse) protein is Aspartate aminotransferase, cytoplasmic.